We begin with the raw amino-acid sequence, 201 residues long: MYB-like transcription factor EOBI (201 aa).

2 HTH myb-type domains span residues 10–62 and 63–117; these read DVEV…LNYL and RPDV…QKHI. 2 consecutive DNA-binding regions (H-T-H motif) follow at residues 38–62 and 90–113; these read WNSLARSAGLKRTGKSCRLRWLNYL and WSKIAKHLPGRTDNEIKNYWRTRI. The disordered stretch occupies residues 121–170; sequence DQNMKKPSKCEQNDQKAISTSQASTGPTDTIDSYSPSSYTENTNNNMENI. Residues 135-159 show a composition bias toward polar residues; the sequence is QKAISTSQASTGPTDTIDSYSPSSY. A compositionally biased stretch (low complexity) spans 160 to 169; sequence TENTNNNMEN.

As to expression, expressed exclusively in flower organs. Accumulates mostly in flower limbs, to a lower extent in pistils and flower tubes, and, at low levels, in stamens.

The protein localises to the nucleus. In terms of biological role, MYB-type transcription factor controlling the production of volatile organic compounds (VOCs), including floral volatile benzenoids and phenylpropanoids (FVBP), in flowers of fragrant cultivars (e.g. cv. Mitchell and cv. V26) by regulating the expression of ODO1, a key regulator of the shikimate pathway, and of several biosynthetic floral scent-related genes (e.g. IGS, EGS, BSMT1, BSMT2, PAL1, PAL2, EPSPS, DAHPS, CS, CM1, ADT1 and PPA-AT). Binds to and activates the promoters of at least ODO1, IGS1 and PAL1. This chain is MYB-like transcription factor EOBI, found in Petunia hybrida (Petunia).